Reading from the N-terminus, the 282-residue chain is Nucleotide-binding protein PXO_02223 (282 aa).

5 to 12 is an ATP binding site; it reads GLSGSGKS. Residue 57–60 participates in GTP binding; it reads DVRS.

It belongs to the RapZ-like family.

Functionally, displays ATPase and GTPase activities. In Xanthomonas oryzae pv. oryzae (strain PXO99A), this protein is Nucleotide-binding protein PXO_02223.